A 214-amino-acid polypeptide reads, in one-letter code: Large ribosomal subunit protein uL1 (214 aa).

The protein belongs to the universal ribosomal protein uL1 family. In terms of assembly, component of the large ribosomal subunit.

It is found in the cytoplasm. Its function is as follows. Component of the large ribosomal subunit. The ribosome is a large ribonucleoprotein complex responsible for the synthesis of proteins in the cell. The sequence is that of Large ribosomal subunit protein uL1 (RPL10A) from Entamoeba histolytica (strain ATCC 30459 / HM-1:IMSS / ABRM).